The chain runs to 281 residues: DegV domain-containing protein spr0652 (281 aa).

In terms of domain architecture, DegV spans 3-280 (WKIIADSGCD…EGGLLMGYEI (278 aa)). Hexadecanoate contacts are provided by Ser-63 and Ser-91.

In terms of biological role, may bind long-chain fatty acids, such as palmitate, and may play a role in lipid transport or fatty acid metabolism. This is DegV domain-containing protein spr0652 from Streptococcus pneumoniae (strain ATCC BAA-255 / R6).